Reading from the N-terminus, the 314-residue chain is Calcium homeostasis modulator protein 4 (314 aa).

Topologically, residues 1 to 14 are cytoplasmic; that stretch reads MCPTLNNIVSSLQR. A helical membrane pass occupies residues 15-37; the sequence is NGIFINSLIAALTIGGQQLFSSS. At 38-48 the chain is on the extracellular side; the sequence is TFSCPCQVGKN. 2 cysteine pairs are disulfide-bonded: cysteine 41–cysteine 131 and cysteine 43–cysteine 162. Residues 49-71 traverse the membrane as a helical segment; the sequence is FYYGSAFLVIPALILLVAGFALR. Topologically, residues 72 to 103 are cytoplasmic; sequence SQMWTITGEYCCSCAPPYRRISPLECKLACLR. A helical transmembrane segment spans residues 104–129; that stretch reads FFSITGRAVIAPLTWLAVTLLTGTYY. The Extracellular segment spans residues 130–183; sequence ECAASEFASVDHYPMFDNVSASKREEILAGFPCCRSAPSDVILVRDEIALLHRY. Residues 184–207 traverse the membrane as a helical segment; that stretch reads QSQMLGWILITLATIAALVSCCVA. The Cytoplasmic segment spans residues 208-314; sequence KCCSPLTSLQ…DRSRGIELKP (107 aa).

The protein belongs to the CALHM family. Oligomerizes to form decameric and undecameric channels. Two hemichannels can assemble in a tail-to-tail manner to form a gap junction. In terms of tissue distribution, placenta.

The protein localises to the cell membrane. May assemble to form gap junction channel-like structures involved in intercellular communication. Channel gating and ion conductance are likely regulated by membrane lipids rather than by membrane depolarization or extracellular calcium levels. In Homo sapiens (Human), this protein is Calcium homeostasis modulator protein 4.